The chain runs to 235 residues: Probable ribonuclease P protein subunit 3 (235 aa).

This sequence belongs to the eukaryotic/archaeal RNase P protein component 3 family.

The protein localises to the nucleus. It carries out the reaction Endonucleolytic cleavage of RNA, removing 5'-extranucleotides from tRNA precursor.. Part of ribonuclease P, a protein complex that generates mature tRNA molecules by cleaving their 5'-ends. The sequence is that of Probable ribonuclease P protein subunit 3 from Schizosaccharomyces pombe (strain 972 / ATCC 24843) (Fission yeast).